The sequence spans 344 residues: Phenylalanine--tRNA ligase alpha subunit (344 aa).

Position 256 (E256) interacts with Mg(2+).

Belongs to the class-II aminoacyl-tRNA synthetase family. Phe-tRNA synthetase alpha subunit type 1 subfamily. In terms of assembly, tetramer of two alpha and two beta subunits. Requires Mg(2+) as cofactor.

It localises to the cytoplasm. It carries out the reaction tRNA(Phe) + L-phenylalanine + ATP = L-phenylalanyl-tRNA(Phe) + AMP + diphosphate + H(+). This chain is Phenylalanine--tRNA ligase alpha subunit, found in Shouchella clausii (strain KSM-K16) (Alkalihalobacillus clausii).